The sequence spans 653 residues: Acetyl-coenzyme A synthetase 1 (653 aa).

Residues 191 to 194 (RGGR), Thr311, and Asn335 each bind CoA. ATP contacts are provided by residues 387–389 (GEP), 411–416 (DTWWQT), Asp500, and Arg515. Ser523 provides a ligand contact to CoA. Residue Arg526 participates in ATP binding. Mg(2+) is bound by residues Val537, His539, and Val542. Residue Arg584 participates in CoA binding. Residue Lys609 is modified to N6-acetyllysine.

This sequence belongs to the ATP-dependent AMP-binding enzyme family. The cofactor is Mg(2+). Acetylated. Deacetylation by the SIR2-homolog deacetylase activates the enzyme.

It catalyses the reaction acetate + ATP + CoA = acetyl-CoA + AMP + diphosphate. Catalyzes the conversion of acetate into acetyl-CoA (AcCoA), an essential intermediate at the junction of anabolic and catabolic pathways. AcsA undergoes a two-step reaction. In the first half reaction, AcsA combines acetate with ATP to form acetyl-adenylate (AcAMP) intermediate. In the second half reaction, it can then transfer the acetyl group from AcAMP to the sulfhydryl group of CoA, forming the product AcCoA. In Pseudomonas putida (strain ATCC 47054 / DSM 6125 / CFBP 8728 / NCIMB 11950 / KT2440), this protein is Acetyl-coenzyme A synthetase 1.